The sequence spans 974 residues: Short transient receptor potential channel 4 (974 aa).

Over 1-324 (MAQFYYKRNV…YDEFPGWRRR (324 aa)) the chain is Cytoplasmic. ANK repeat units follow at residues 29 to 60 (LSPS…IYFK), 71 to 93 (RTAL…LSFN), 96 to 118 (VGDA…LLNH), and 141 to 165 (PDIT…VQKG). The tract at residues 87–172 (ELLLSFNVYV…QKGVSVPRPH (86 aa)) is multimerization domain. Residues histidine 172, cysteine 176, cysteine 178, and cysteine 181 each coordinate Zn(2+). Positions 223–260 (LSWELQELSKVENEFKSEYEELSRQCKQFAKDLLDQTR) form a coiled coil. The interval 254–304 (DLLDQTRSSRELEIILNYRDDNSLIEEQSGNDLARLKLAIKYRQKEFVAQP) is multimerization domain. The discontinuously helical intramembrane region spans 325–359 (HWAVKMVTCFIIGLLFPVFSVCYLIAPKSPLGLFI). Residues 360–362 (RKP) are Cytoplasmic-facing. A helical membrane pass occupies residues 363–383 (FIKFICHTASYLTFLFLLLLA). The Extracellular segment spans residues 384 to 403 (SQHIDRSDLNRQGPPPTIVE). A helical transmembrane segment spans residues 404-418 (WMILPWVLGFIWGEI). Positions 417, 420, 435, and 438 each coordinate Ca(2+). The Cytoplasmic portion of the chain corresponds to 419–432 (KQMWDGGLQDYIHD). A helical transmembrane segment spans residues 433-453 (WWNLMDFVMNSLYLATISLKI). Residues 454–475 (VAFVKYSALNPRESWDMWHPTL) lie on the Extracellular side of the membrane. A helical membrane pass occupies residues 476 to 498 (VAEALFAIANIFSSLRLISLFTA). The Cytoplasmic portion of the chain corresponds to 499 to 511 (NSHLGPLQISLGR). A helical membrane pass occupies residues 512–534 (MLLDILKFLFIYCLVLLAFANGL). The Extracellular portion of the chain corresponds to 535-599 (NQLYFYYEET…HEFTEFVGAT (65 aa)). A disulfide bond links cysteine 549 and cysteine 554. A helical transmembrane segment spans residues 600-620 (MFGTYNVISLVVLLNMLIAMM). Positions 615–974 (MLIAMMNNSY…AHEDYVTTRL (360 aa)) are interaction with ITPR1, ITPR2 and ITPR3. The Cytoplasmic portion of the chain corresponds to 621–974 (NNSYQLIADH…AHEDYVTTRL (354 aa)). Residues 765–787 (ANAASSADSDEKSQSEGNGKDKR) form a disordered region. Residues 773–784 (SDEKSQSEGNGK) are compositionally biased toward basic and acidic residues. 2 positions are modified to phosphotyrosine; by FYN: tyrosine 956 and tyrosine 969. The segment at 972–974 (TRL) is PDZ-binding domain.

This sequence belongs to the transient receptor (TC 1.A.4) family. STrpC subfamily. TRPC4 sub-subfamily. As to quaternary structure, homotetramer. Heterotetramer with TRPC1 and/or TRPC5. Forms a heteromeric ion channel with TRPC1, with a 1:3 TRPC1:TRPC4 stoichiometry. Interacts with TRPC4AP. Isoform alpha but not isoform beta interacts with ITPR1, ITPR2 and ITPR3. Interacts with NHERF1. Interacts with MX1 and RNF24. Interacts (via CIRB domain) with SESTD1 (via the spectrin 1 repeat) and SPTBN5 (via C-terminus). Interacts with CDH5 and CTNNB1. Interacts (via protein 4.1-binding domain) with EPB41L2. Interacts with PLSCR1. As to expression, abundantly expressed in brain (hippocampal CA1 pyramidal neurons, dentate gyrus granule cells, and cerebral cortical neurons, and in the septal nuclei and the mitral layer of olfactory bulb). Lower levels are detected in other tissues.

It localises to the cell membrane. It catalyses the reaction Ca(2+)(in) = Ca(2+)(out). The enzyme catalyses Na(+)(in) = Na(+)(out). It carries out the reaction Li(+)(in) = Li(+)(out). The catalysed reaction is Cs(+)(in) = Cs(+)(out). Its activity is regulated as follows. May be operated by a phosphatidylinositol second messenger system activated by receptor tyrosine kinases or G-protein coupled receptors. May be activated by intracellular calcium store depletion. In terms of biological role, forms a receptor-activated non-selective calcium permeant cation channel. Acts as a cell-cell contact-dependent endothelial calcium entry channel. Forms a homomeric ion channel or a heteromeric ion channel with TRPC1; the heteromeric ion channel has reduced calcium permeability compared to the homomeric channel. Also permeable to monovalent ions including sodium, lithium and cesium ions. In Mus musculus (Mouse), this protein is Short transient receptor potential channel 4 (Trpc4).